The chain runs to 408 residues: MADIRWDALWTHVHLATLAADADGYGEIRDGAIAVRDGRIAWLGARADLPAGARAEREHDGGGAWLTPGLIDCHTHLVHAGNRSNEFEARLNGVPYEHIARAGGGILSTVRATRAASEDALAQASLPRLNALRAEGVTTVEIKSGYGLDLETERRMLRVARRFGQTLRVRVRTTFLGAHAVPPEFAGRADDYIGHLCADVLPALAAEGLVDAVDAFCETIGFSPAQTARMFDAAQALGLPVKLHAEQLSDQGGAALVARYGGLSADHLECLTDAGVAAMAEAGTVAVLLPGAFYCLRETRLPPLQALRQAGVPMAVSTDCNPGTSPLSSLLLAMNMACTLFRLTPLEALTGATRHAAAALGLAGTCGVLAPGCVADFALWRIDRPADLAYAMGLNPCAGVVKDGAPAR.

Fe(3+)-binding residues include histidine 74 and histidine 76. Residues histidine 74 and histidine 76 each coordinate Zn(2+). 3 residues coordinate 4-imidazolone-5-propanoate: arginine 83, tyrosine 146, and histidine 179. Tyrosine 146 serves as a coordination point for N-formimidoyl-L-glutamate. Position 244 (histidine 244) interacts with Fe(3+). Histidine 244 lines the Zn(2+) pocket. Glutamine 247 is a binding site for 4-imidazolone-5-propanoate. Residue aspartate 319 participates in Fe(3+) binding. Aspartate 319 provides a ligand contact to Zn(2+). N-formimidoyl-L-glutamate-binding residues include asparagine 321 and glycine 323. Position 324 (threonine 324) interacts with 4-imidazolone-5-propanoate.

Belongs to the metallo-dependent hydrolases superfamily. HutI family. Requires Zn(2+) as cofactor. The cofactor is Fe(3+).

The protein resides in the cytoplasm. It catalyses the reaction 4-imidazolone-5-propanoate + H2O = N-formimidoyl-L-glutamate. It functions in the pathway amino-acid degradation; L-histidine degradation into L-glutamate; N-formimidoyl-L-glutamate from L-histidine: step 3/3. Functionally, catalyzes the hydrolytic cleavage of the carbon-nitrogen bond in imidazolone-5-propanoate to yield N-formimidoyl-L-glutamate. It is the third step in the universal histidine degradation pathway. This chain is Imidazolonepropionase, found in Ralstonia nicotianae (strain ATCC BAA-1114 / GMI1000) (Ralstonia solanacearum).